We begin with the raw amino-acid sequence, 238 residues long: TATA-box-binding protein (238 aa).

The segment at 1–58 (MDLKLPPTNPTNPQQAKTFMKSIEEDEKNKAEDLDIIKKEDIDEPKQEDTTDGNGGGG) is disordered. Positions 27–49 (EKNKAEDLDIIKKEDIDEPKQED) are enriched in basic and acidic residues. Repeat copies occupy residues 65 to 141 (LQNI…ARII) and 155 to 232 (IQNI…YPVL).

This sequence belongs to the TBP family. As to quaternary structure, belongs to the TFIID complex together with the TBP-associated factors (TAFs). Binds DNA as monomer.

Its subcellular location is the nucleus. Functionally, general transcription factor that functions at the core of the DNA-binding multiprotein factor TFIID. Binding of TFIID to the TATA box is the initial transcriptional step of the pre-initiation complex (PIC), playing a role in the activation of eukaryotic genes transcribed by RNA polymerase II. This Candida albicans (strain SC5314 / ATCC MYA-2876) (Yeast) protein is TATA-box-binding protein (TBP1).